We begin with the raw amino-acid sequence, 268 residues long: Deoxyuridine 5'-triphosphate nucleotidohydrolase (268 aa).

Substrate contacts are provided by residues 172–174 (RSS) and 263–264 (FG).

It belongs to the dUTPase family. Requires Mg(2+) as cofactor.

The catalysed reaction is dUTP + H2O = dUMP + diphosphate + H(+). In terms of biological role, involved in nucleotide metabolism: produces dUMP, the immediate precursor of thymidine nucleotides and decreases the intracellular concentration of dUTP to avoid uracil incorporation into viral DNA. This chain is Deoxyuridine 5'-triphosphate nucleotidohydrolase, found in Suid herpesvirus 1 (strain Kaplan) (SuHV-1).